The chain runs to 283 residues: Urease accessory protein UreD (283 aa).

Residues 1-21 (MTQTQPVGTLRLTIDDQGPQG) are disordered.

It belongs to the UreD family. In terms of assembly, ureD, UreF and UreG form a complex that acts as a GTP-hydrolysis-dependent molecular chaperone, activating the urease apoprotein by helping to assemble the nickel containing metallocenter of UreC. The UreE protein probably delivers the nickel.

It localises to the cytoplasm. Its function is as follows. Probably acts in the maturation of urease via the functional incorporation of the urease nickel metallocenter. Required for urease expression. This is Urease accessory protein UreD from Corynebacterium glutamicum (strain ATCC 13032 / DSM 20300 / JCM 1318 / BCRC 11384 / CCUG 27702 / LMG 3730 / NBRC 12168 / NCIMB 10025 / NRRL B-2784 / 534).